A 546-amino-acid chain; its full sequence is Chaperonin GroEL (546 aa).

ATP-binding positions include 29–32, lysine 50, 86–90, glycine 414, and aspartate 492; these read TMGP and DGTTT.

This sequence belongs to the chaperonin (HSP60) family. As to quaternary structure, forms a cylinder of 14 subunits composed of two heptameric rings stacked back-to-back. Interacts with the co-chaperonin GroES.

The protein resides in the cytoplasm. It catalyses the reaction ATP + H2O + a folded polypeptide = ADP + phosphate + an unfolded polypeptide.. In terms of biological role, together with its co-chaperonin GroES, plays an essential role in assisting protein folding. The GroEL-GroES system forms a nano-cage that allows encapsulation of the non-native substrate proteins and provides a physical environment optimized to promote and accelerate protein folding. This Helicobacter pylori (strain P12) protein is Chaperonin GroEL.